The chain runs to 346 residues: DNA primase small subunit PriS (346 aa).

Catalysis depends on residues Asp-95 and Asp-97. Zn(2+)-binding residues include Cys-106, His-108, Cys-114, and Cys-117. The Zinc knuckle motif motif lies at 106–117 (CEHEPGTVCPIC). The active site involves Asp-280.

The protein belongs to the eukaryotic-type primase small subunit family. As to quaternary structure, heterodimer of a small subunit (PriS) and a large subunit (PriL). It depends on Mg(2+) as a cofactor. Mn(2+) is required as a cofactor.

Its function is as follows. Catalytic subunit of DNA primase, an RNA polymerase that catalyzes the synthesis of short RNA molecules used as primers for DNA polymerase during DNA replication. The small subunit contains the primase catalytic core and has DNA synthesis activity on its own. Binding to the large subunit stabilizes and modulates the activity, increasing the rate of DNA synthesis while decreasing the length of the DNA fragments, and conferring RNA synthesis capability. The DNA polymerase activity may enable DNA primase to also catalyze primer extension after primer synthesis. May also play a role in DNA repair. This chain is DNA primase small subunit PriS, found in Pyrococcus horikoshii (strain ATCC 700860 / DSM 12428 / JCM 9974 / NBRC 100139 / OT-3).